The following is a 93-amino-acid chain: Small ribosomal subunit protein uS19c (93 aa).

The segment at 73–93 (EFSPTRTFRGHTKSDKKSRRP) is disordered. The span at 80–93 (FRGHTKSDKKSRRP) shows a compositional bias: basic residues.

The protein belongs to the universal ribosomal protein uS19 family.

It is found in the plastid. It localises to the chloroplast. Protein S19 forms a complex with S13 that binds strongly to the 16S ribosomal RNA. The chain is Small ribosomal subunit protein uS19c (rps19) from Mesostigma viride (Green alga).